A 176-amino-acid chain; its full sequence is RING-H2 finger protein ATL73 (176 aa).

A signal peptide spans 1-16 (MARFLLATQATPTISA). Residues 42 to 62 (VIILAALLCALICALGINSVL) form a helical membrane-spanning segment. An RING-type; atypical zinc finger spans residues 113 to 155 (CLICLGDFVEGETVRVLPKCNHGFHVKCIDTWLLSHSSCPTCR).

Belongs to the RING-type zinc finger family. ATL subfamily.

The protein resides in the membrane. The catalysed reaction is S-ubiquitinyl-[E2 ubiquitin-conjugating enzyme]-L-cysteine + [acceptor protein]-L-lysine = [E2 ubiquitin-conjugating enzyme]-L-cysteine + N(6)-ubiquitinyl-[acceptor protein]-L-lysine.. It participates in protein modification; protein ubiquitination. This is RING-H2 finger protein ATL73 (ATL73) from Arabidopsis thaliana (Mouse-ear cress).